The sequence spans 250 residues: Sulfate transporter CysZ (250 aa).

4 helical membrane-spanning segments follow: residues 27–47 (FVVL…YYLF), 64–84 (FLSW…LATF), 150–170 (FLLL…WFLF), and 210–230 (MLVA…PVAV).

It belongs to the CysZ family.

It is found in the cell inner membrane. In terms of biological role, high affinity, high specificity proton-dependent sulfate transporter, which mediates sulfate uptake. Provides the sulfur source for the cysteine synthesis pathway. This is Sulfate transporter CysZ from Vibrio cholerae serotype O1 (strain ATCC 39541 / Classical Ogawa 395 / O395).